Reading from the N-terminus, the 290-residue chain is uncharacterized protein (290 aa).

The interval 153–178 (EMVPITTSSTTPRSKGDEATSTGAFP) is disordered. Residues 157 to 178 (ITTSSTTPRSKGDEATSTGAFP) are compositionally biased toward polar residues. A helical transmembrane segment spans residues 202–222 (LIAVTLLLGGAAIIVFVIFEV). Positions 246 to 276 (KEEDQKPGTTESQLDSQPEKVKHNVPNSSDS) are disordered. Polar residues predominate over residues 252–261 (PGTTESQLDS).

The protein resides in the membrane. This is an uncharacterized protein from Mus musculus (Mouse).